The chain runs to 271 residues: 3-methyl-2-oxobutanoate hydroxymethyltransferase (271 aa).

Mg(2+)-binding residues include aspartate 42 and aspartate 86. 3-methyl-2-oxobutanoate-binding positions include aspartate 42–serine 43, aspartate 86, and lysine 116. Glutamate 118 contributes to the Mg(2+) binding site. The Proton acceptor role is filled by glutamate 185.

It belongs to the PanB family. In terms of assembly, homodecamer; pentamer of dimers. It depends on Mg(2+) as a cofactor.

Its subcellular location is the cytoplasm. The catalysed reaction is 3-methyl-2-oxobutanoate + (6R)-5,10-methylene-5,6,7,8-tetrahydrofolate + H2O = 2-dehydropantoate + (6S)-5,6,7,8-tetrahydrofolate. The protein operates within cofactor biosynthesis; (R)-pantothenate biosynthesis; (R)-pantoate from 3-methyl-2-oxobutanoate: step 1/2. Functionally, catalyzes the reversible reaction in which hydroxymethyl group from 5,10-methylenetetrahydrofolate is transferred onto alpha-ketoisovalerate to form ketopantoate. In Synechococcus sp. (strain CC9605), this protein is 3-methyl-2-oxobutanoate hydroxymethyltransferase.